A 313-amino-acid chain; its full sequence is Secretory carrier-associated membrane protein 4 (313 aa).

The segment at 1-69 is disordered; it reads MAGRSRYDNP…LPPEPADFYN (69 aa). The Cytoplasmic segment spans residues 1-148; sequence MAGRSRYDNP…EIPVHLQRTQ (148 aa). Residues 85–116 adopt a coiled-coil conformation; sequence MKTREKELLAKEAELNRREKEIKRREEAAARA. A run of 4 helical transmembrane segments spans residues 149–169, 181–201, 216–236, and 255–275; these read YVAF…IICV, IWFL…YLWY, FGWF…AAVS, and LIGN…MFCL. The Cytoplasmic portion of the chain corresponds to 276–313; that stretch reads ESLLSMWVIQRVYLYFRGSGKEAEMKREAARSAARAAF.

The protein belongs to the SCAMP family.

Its subcellular location is the cell membrane. It is found in the cytoplasmic vesicle. It localises to the secretory vesicle membrane. Its function is as follows. Probably involved in membrane trafficking. In Oryza sativa subsp. japonica (Rice), this protein is Secretory carrier-associated membrane protein 4 (SCAMP4).